A 127-amino-acid chain; its full sequence is PLKTKPIDNNLPHRTGYNQASKQQTAPPCLLQRTVTTYVCRLPSRSGFWGSPPLPIIFSFVPDGRLSVRALVFSSMCAGFVIGEEDRDRIIMMIIIIHSPTIFILFCCSKEKRKKKQAATLTITLTS.

Positions 1–24 are disordered; that stretch reads PLKTKPIDNNLPHRTGYNQASKQQ.

This is an uncharacterized protein from Homo sapiens (Human).